The following is a 251-amino-acid chain: Imidazole glycerol phosphate synthase subunit HisF (251 aa).

Catalysis depends on residues Asp11 and Asp130.

This sequence belongs to the HisA/HisF family. In terms of assembly, heterodimer of HisH and HisF.

It is found in the cytoplasm. It catalyses the reaction 5-[(5-phospho-1-deoxy-D-ribulos-1-ylimino)methylamino]-1-(5-phospho-beta-D-ribosyl)imidazole-4-carboxamide + L-glutamine = D-erythro-1-(imidazol-4-yl)glycerol 3-phosphate + 5-amino-1-(5-phospho-beta-D-ribosyl)imidazole-4-carboxamide + L-glutamate + H(+). It functions in the pathway amino-acid biosynthesis; L-histidine biosynthesis; L-histidine from 5-phospho-alpha-D-ribose 1-diphosphate: step 5/9. Functionally, IGPS catalyzes the conversion of PRFAR and glutamine to IGP, AICAR and glutamate. The HisF subunit catalyzes the cyclization activity that produces IGP and AICAR from PRFAR using the ammonia provided by the HisH subunit. The protein is Imidazole glycerol phosphate synthase subunit HisF of Pelodictyon phaeoclathratiforme (strain DSM 5477 / BU-1).